Reading from the N-terminus, the 858-residue chain is Leucine--tRNA ligase (858 aa).

Residues 42 to 52 carry the 'HIGH' region motif; it reads PYPSGRLHMGH. Residues 618–622 carry the 'KMSKS' region motif; the sequence is KMSKS. Lys621 provides a ligand contact to ATP.

Belongs to the class-I aminoacyl-tRNA synthetase family.

Its subcellular location is the cytoplasm. The enzyme catalyses tRNA(Leu) + L-leucine + ATP = L-leucyl-tRNA(Leu) + AMP + diphosphate. This Aliivibrio salmonicida (strain LFI1238) (Vibrio salmonicida (strain LFI1238)) protein is Leucine--tRNA ligase.